The chain runs to 355 residues: Olfactory receptor 1I1 (355 aa).

At 1 to 25 (MEPEKQTEISEFFLQGLSEKPEHQT) the chain is on the extracellular side. A helical transmembrane segment spans residues 26–49 (LLFTMFLSTYLVTIIGNALIILAI). Residues 50–57 (ITDSHLHT) are Cytoplasmic-facing. The chain crosses the membrane as a helical span at residues 58–79 (PMYFFLFNLSLVDTLLSSTTVP). Residues 80–100 (KMLANIQAQSRAIPFVGCLTQ) are Extracellular-facing. Residues 101–120 (MYAFHLFGTMDSFLLAVMAI) traverse the membrane as a helical segment. Over 121-139 (DRFVAIVHPQRYLVLMCSP) the chain is Cytoplasmic. Residues 140–158 (VCGLLLGASWMITNLQSLI) form a helical membrane-spanning segment. Topologically, residues 159–195 (HTCLMAQLTFCAGSEISHFFCDLMPLLKLSGSDTHTN) are extracellular. A helical membrane pass occupies residues 196–219 (ELVIFAFGIVVGTSPFSCILLSYI). At 220–236 (RIFWTVFKIPSTRGKWK) the chain is on the cytoplasmic side. Residues 237–259 (AFSTCGLHLTVVSLSYGTIFAVY) traverse the membrane as a helical segment. Over 260-272 (LQPTSPSSSQKDK) the chain is Extracellular. A helical transmembrane segment spans residues 273 to 292 (AAALMCGVFIPMLNPFIYSI). Residues 293-355 (RNKDMKAALG…QSLAGNRDME (63 aa)) lie on the Cytoplasmic side of the membrane.

It belongs to the G-protein coupled receptor 1 family.

The protein resides in the cell membrane. Odorant receptor. In Homo sapiens (Human), this protein is Olfactory receptor 1I1 (OR1I1).